The sequence spans 537 residues: Membrane protein insertase YidC (537 aa).

4 helical membrane passes run 5–25, 353–373, 418–438, and 495–515; these read LIIA…IFPT, GNYG…FFPL, VNPL…FGLY, and MLML…GLVI.

This sequence belongs to the OXA1/ALB3/YidC family. Type 1 subfamily. As to quaternary structure, interacts with the Sec translocase complex via SecD. Specifically interacts with transmembrane segments of nascent integral membrane proteins during membrane integration.

The protein resides in the cell inner membrane. Required for the insertion and/or proper folding and/or complex formation of integral membrane proteins into the membrane. Involved in integration of membrane proteins that insert both dependently and independently of the Sec translocase complex, as well as at least some lipoproteins. Aids folding of multispanning membrane proteins. The chain is Membrane protein insertase YidC from Citrifermentans bemidjiense (strain ATCC BAA-1014 / DSM 16622 / JCM 12645 / Bem) (Geobacter bemidjiensis).